The sequence spans 252 residues: uncharacterized protein (252 aa).

The region spanning 96-238 (FRRFTPRARN…ITTLASLTGA (143 aa)) is the Clp R domain. Repeat regions lie at residues 99 to 164 (FTPR…PAVT) and 172 to 238 (FSGP…LTGA).

It belongs to the ClpA/ClpB family. ClpC subfamily.

This is an uncharacterized protein from Mycobacterium bovis (strain ATCC BAA-935 / AF2122/97).